A 178-amino-acid chain; its full sequence is ATP synthase subunit delta (178 aa).

The protein belongs to the ATPase delta chain family. In terms of assembly, F-type ATPases have 2 components, F(1) - the catalytic core - and F(0) - the membrane proton channel. F(1) has five subunits: alpha(3), beta(3), gamma(1), delta(1), epsilon(1). F(0) has three main subunits: a(1), b(2) and c(10-14). The alpha and beta chains form an alternating ring which encloses part of the gamma chain. F(1) is attached to F(0) by a central stalk formed by the gamma and epsilon chains, while a peripheral stalk is formed by the delta and b chains.

The protein resides in the cell inner membrane. F(1)F(0) ATP synthase produces ATP from ADP in the presence of a proton or sodium gradient. F-type ATPases consist of two structural domains, F(1) containing the extramembraneous catalytic core and F(0) containing the membrane proton channel, linked together by a central stalk and a peripheral stalk. During catalysis, ATP synthesis in the catalytic domain of F(1) is coupled via a rotary mechanism of the central stalk subunits to proton translocation. In terms of biological role, this protein is part of the stalk that links CF(0) to CF(1). It either transmits conformational changes from CF(0) to CF(1) or is implicated in proton conduction. The polypeptide is ATP synthase subunit delta (Dechloromonas aromatica (strain RCB)).